The sequence spans 354 residues: Methionine import ATP-binding protein MetN (354 aa).

Positions 8–250 (LDHIDITFRQ…PKEALTQEFI (243 aa)) constitute an ABC transporter domain. 42–49 (GYSGAGKS) contacts ATP.

It belongs to the ABC transporter superfamily. Methionine importer (TC 3.A.1.24) family. As to quaternary structure, the complex is composed of two ATP-binding proteins (MetN), two transmembrane proteins (MetI) and a solute-binding protein (MetQ).

Its subcellular location is the cell membrane. The enzyme catalyses L-methionine(out) + ATP + H2O = L-methionine(in) + ADP + phosphate + H(+). The catalysed reaction is D-methionine(out) + ATP + H2O = D-methionine(in) + ADP + phosphate + H(+). In terms of biological role, part of the ABC transporter complex MetNIQ involved in methionine import. Responsible for energy coupling to the transport system. This chain is Methionine import ATP-binding protein MetN, found in Streptococcus pyogenes serotype M12 (strain MGAS2096).